The following is a 385-amino-acid chain: 3-hydroxyisobutyryl-CoA hydrolase, mitochondrial (385 aa).

4 residues coordinate substrate: Glu-120, Gly-145, Glu-168, and Asp-176.

The protein belongs to the enoyl-CoA hydratase/isomerase family.

It is found in the mitochondrion. It carries out the reaction 3-hydroxy-2-methylpropanoyl-CoA + H2O = 3-hydroxy-2-methylpropanoate + CoA + H(+). It functions in the pathway amino-acid degradation; L-valine degradation. In terms of biological role, hydrolyzes 3-hydroxyisobutyryl-CoA (HIBYL-CoA), a saline catabolite. Has high activity toward isobutyryl-CoA. Could be an isobutyryl-CoA dehydrogenase that functions in valine catabolism. Also hydrolyzes 3-hydroxypropanoyl-CoA. This chain is 3-hydroxyisobutyryl-CoA hydrolase, mitochondrial (HIBCH), found in Gallus gallus (Chicken).